Reading from the N-terminus, the 80-residue chain is Conotoxin Bu14 (80 aa).

The signal sequence occupies residues Ala-1–Ala-8. Positions Ala-9–Arg-40 are excised as a propeptide. 3 cysteine pairs are disulfide-bonded: Cys-41-Cys-55, Cys-48-Cys-59, and Cys-54-Cys-69.

Belongs to the conotoxin O1 superfamily. As to expression, expressed by the venom duct.

Its subcellular location is the secreted. This Conus bullatus (Bubble cone) protein is Conotoxin Bu14.